The primary structure comprises 119 residues: Large ribosomal subunit protein bL19 (119 aa).

Belongs to the bacterial ribosomal protein bL19 family.

Its function is as follows. This protein is located at the 30S-50S ribosomal subunit interface and may play a role in the structure and function of the aminoacyl-tRNA binding site. The sequence is that of Large ribosomal subunit protein bL19 from Leuconostoc citreum (strain KM20).